A 785-amino-acid chain; its full sequence is MTESNLGTESRTATIDNGAFGTRVITFSTGRLARQAAGSVVAQLGETVVLSATTVGRQPKEHFDFFPLTVDVEERMYAAGRIPGSFFRREGRPSEDAILTCRLIDRPLRPSFVKGLRNEVQVVETVLALDPSHPYDVVAINAASMSTKLSGLPFSGPIGATRMAHIDGSWVAFPTHEELVRATFDMVVAGRALPDGDVAIMMVEAEATAHTAKLVADGASAPTEEVVASGLEAAKPAIRELCRAQSELAEVAAKPVAEFPVFLDYSDDVYDAVTELAREDVAEALKIAGKADREEALDRIKARAVEELGPRFEGREKELSAALRSLTKSEVRSRVLREQVRIDGRGPRDIRPLTAEVGVLPRVHGSALFERGETQIMGVTTLNMLRMEQSLDTLSPEKSKRYMHNYNFPPYSTGETGRVGSPKRREIGHGALAERALIPVLPSREEFPYAIRQVSEALGSNGSTSMGSVCASTLGLLSAGVPLKAPVAGIAMGLISDEVEGKTRYVTLTDILGAEDAFGDMDFKVAGTQEFVTALQLDTKLDGIPSDVLAAALQQAYEARQTILEVMQAAIEAPATMSDYAPRVTTVKIPVDKIGMVIGPKGQTINAIQDETGAEISIEDDGTIYVGATNGPAAQAAVERINGIANPTLPKVGDRFLGTVVKTAAFGAFISLLPGRDGLLHISKVGDGKRVEKVEDFLNVGDKVEVEIADIDQRGKIYLDKVRPEGAEAPAEGAAERPAGRDRGDRGPRDRGDRGGRGPDRGDSGDGGDGGEGGESRPRRRTRRS.

Mg(2+)-binding residues include aspartate 516 and aspartate 522. Residues proline 582–isoleucine 641 enclose the KH domain. One can recognise an S1 motif domain in the interval glycine 653–valine 722. The segment at valine 722–serine 785 is disordered. Positions alanine 734–serine 764 are enriched in basic and acidic residues.

The protein belongs to the polyribonucleotide nucleotidyltransferase family. Requires Mg(2+) as cofactor.

The protein localises to the cytoplasm. It carries out the reaction RNA(n+1) + phosphate = RNA(n) + a ribonucleoside 5'-diphosphate. Its function is as follows. Involved in mRNA degradation. Catalyzes the phosphorolysis of single-stranded polyribonucleotides processively in the 3'- to 5'-direction. The sequence is that of Polyribonucleotide nucleotidyltransferase from Salinispora tropica (strain ATCC BAA-916 / DSM 44818 / JCM 13857 / NBRC 105044 / CNB-440).